A 363-amino-acid polypeptide reads, in one-letter code: Aminomethyltransferase (363 aa).

Belongs to the GcvT family. The glycine cleavage system is composed of four proteins: P, T, L and H.

The catalysed reaction is N(6)-[(R)-S(8)-aminomethyldihydrolipoyl]-L-lysyl-[protein] + (6S)-5,6,7,8-tetrahydrofolate = N(6)-[(R)-dihydrolipoyl]-L-lysyl-[protein] + (6R)-5,10-methylene-5,6,7,8-tetrahydrofolate + NH4(+). In terms of biological role, the glycine cleavage system catalyzes the degradation of glycine. This is Aminomethyltransferase from Staphylococcus aureus (strain N315).